Consider the following 241-residue polypeptide: Transcription factor HEC1 (241 aa).

Residues 128–177 form the bHLH domain; the sequence is ISKDPQSVAARHRRERISERIRILQRLVPGGTKMDTASMLDEAIHYVKFL.

In terms of assembly, homodimer. Interacts with SPT. Interacts with BZIP30. Flowers, especially in gynoecium.

The protein localises to the nucleus. Functionally, required for the female reproductive tract development and fertility. In Arabidopsis thaliana (Mouse-ear cress), this protein is Transcription factor HEC1 (HEC1).